Reading from the N-terminus, the 168-residue chain is Fusion protein P6 (168 aa).

The next 4 helical transmembrane spans lie at 29-49 (IWPL…AGFF), 52-72 (AGFT…TPTL), 94-114 (FQSL…ALIA), and 143-163 (ALPG…LWPS).

In terms of assembly, interacts with P3.

It localises to the virion membrane. Its function is as follows. Mediates the fusion with the host outer membrane during virus entry into the host cell. In Pseudomonas savastanoi pv. phaseolicola (Pseudomonas syringae pv. phaseolicola), this protein is Fusion protein P6 (P6).